Here is a 153-residue protein sequence, read N- to C-terminus: Ribosome maturation factor RimP (153 aa).

It belongs to the RimP family.

Its subcellular location is the cytoplasm. Required for maturation of 30S ribosomal subunits. In Coxiella burnetii (strain RSA 331 / Henzerling II), this protein is Ribosome maturation factor RimP.